Here is a 211-residue protein sequence, read N- to C-terminus: Proteasome subunit beta (211 aa).

The propeptide at 1–9 is removed in mature form; by autocatalysis; it reads MSEAETLKG. Catalysis depends on Thr-10, which acts as the Nucleophile.

It belongs to the peptidase T1B family. As to quaternary structure, the 20S proteasome core is composed of 14 alpha and 14 beta subunits that assemble into four stacked heptameric rings, resulting in a barrel-shaped structure. The two inner rings, each composed of seven catalytic beta subunits, are sandwiched by two outer rings, each composed of seven alpha subunits. The catalytic chamber with the active sites is on the inside of the barrel. Has a gated structure, the ends of the cylinder being occluded by the N-termini of the alpha-subunits. Is capped at one or both ends by the proteasome regulatory ATPase, PAN.

The protein localises to the cytoplasm. It catalyses the reaction Cleavage of peptide bonds with very broad specificity.. Its activity is regulated as follows. The formation of the proteasomal ATPase PAN-20S proteasome complex, via the docking of the C-termini of PAN into the intersubunit pockets in the alpha-rings, triggers opening of the gate for substrate entry. Interconversion between the open-gate and close-gate conformations leads to a dynamic regulation of the 20S proteasome proteolysis activity. Component of the proteasome core, a large protease complex with broad specificity involved in protein degradation. This Methanosphaerula palustris (strain ATCC BAA-1556 / DSM 19958 / E1-9c) protein is Proteasome subunit beta.